An 813-amino-acid polypeptide reads, in one-letter code: MATGDSLEDIKIEIDDDLEKIPIEEVFKKLRCSREGLSGAEGKERLKIFGPNKLENKKKEHITLRFFALMFKPLSWVIQAAAIMAMLFANGDGRQLFLGIVCLLIVNTIICYLKEDDAANVVAMARAGLSPKTKVLRDGKWSEQEASILVPGDIVSIKPGDIIPCDARLLEGDTLKVDQSALTGEFGPITKGPGEEVFSGTTCKQGEMEAVVIATGVHTFSGTTAHLVDNRTNKVGHFRKVVTEIENLCVISIAIGISIEVIVMYWIQRRNFSDVINNLLVLVIGGIPLAMPTVLYVIMVTGSLRLYRTGTITQRITAIEDMAAIDVLCSDKTGTLTLNKLSVDKNLIKVYSKDVEKEQVLLLAARASRIENRDGIDAAMVGSLADPKEARAGIREVHFNLVDKRTALTYIDGNGDWHRVSKGTPEQILDLCNARDDLRKSVHSAIRNYAERGLKSFAISWFRNTNCNTVFFFPYQLCSEHKYHIVNKLQERHICGLIGDGVDDVPSLKKADVGIAVANATEAARAASDIVLTEPGLSVIIDAVLASRAILQQMKHYTIYAVSITIRVVFGFMFIALIWKFDFSPFMVLAIALLNEETTKAITMDNVTNPSPTPDSLKLKEIFATGVVYGSYMALITVVFFWAAYRTDIFPRTFHVRDLRGNEAEMMCALYLQVSIMSQALFFVIQSRSWFFVERPGELLFLSFVTVQTIATTLAVYASWETARIEGIGWSWAGVIWLYNIIFFFPLDIMKFGIRYILTGKAQSLFDNMVHLVLNSYAKLSNGIYNHTQADHTYSLLEVSTPPSQDLRGVGWV.

Over Met-1–Phe-66 the chain is Cytoplasmic. A helical membrane pass occupies residues Phe-67 to Met-86. At Leu-87–Arg-94 the chain is on the extracellular side. A helical membrane pass occupies residues Gln-95–Glu-115. The Cytoplasmic segment spans residues Asp-116–Ile-245. The helical transmembrane segment at Glu-246–Trp-266 threads the bilayer. Over Ile-267–Val-275 the chain is Extracellular. Residues Ile-276 to Thr-293 form a helical membrane-spanning segment. The Cytoplasmic segment spans residues Val-294–Lys-555. Asp-331 acts as the 4-aspartylphosphate intermediate in catalysis. Mg(2+) is bound by residues Asp-500 and Asp-504. Residues His-556–Leu-577 form a helical membrane-spanning segment. Over Ile-578 to Asp-582 the chain is Extracellular. Residues Phe-583–Asp-605 traverse the membrane as a helical segment. Residues Asn-606–Ile-622 lie on the Cytoplasmic side of the membrane. A helical transmembrane segment spans residues Phe-623–Ala-643. Over Ala-644 to Ala-664 the chain is Extracellular. Residues Glu-665–Ile-685 form a helical membrane-spanning segment. Residues Gln-686–Gly-697 lie on the Cytoplasmic side of the membrane. A helical membrane pass occupies residues Glu-698–Ala-718. Residues Ser-719–Glu-726 are Extracellular-facing. Residues Gly-727 to Leu-747 form a helical membrane-spanning segment. Over Asp-748 to Val-813 the chain is Cytoplasmic. Position 776 is a phosphoserine (Ser-776).

This sequence belongs to the cation transport ATPase (P-type) (TC 3.A.3) family. Type IIIA subfamily.

It localises to the membrane. In Arabidopsis thaliana (Mouse-ear cress), this protein is Putative ATPase, plasma membrane-like.